Reading from the N-terminus, the 289-residue chain is Oxaloacetate decarboxylase 1 (289 aa).

Ser50 lines the substrate pocket. Asp88 contributes to the Mg(2+) binding site. Substrate is bound by residues Arg159 and His235.

This sequence belongs to the isocitrate lyase/PEP mutase superfamily. Oxaloacetate decarboxylase family. As to quaternary structure, homotetramer; dimer of dimers. The cofactor is Mg(2+).

The catalysed reaction is oxaloacetate + H(+) = pyruvate + CO2. Catalyzes the decarboxylation of oxaloacetate into pyruvate. Seems to play a role in maintaining cellular concentrations of bicarbonate and pyruvate. This chain is Oxaloacetate decarboxylase 1, found in Pseudomonas putida (strain W619).